We begin with the raw amino-acid sequence, 369 residues long: C2 calcium-dependent domain-containing protein 4A (369 aa).

Disordered regions lie at residues Pro151–Pro176 and Arg197–Glu240. Over residues Ala153–Pro168 the composition is skewed to pro residues. A compositionally biased stretch (low complexity) spans Ser220–Pro237. One can recognise a C2 domain in the interval Ala253–Leu369.

Belongs to the C2CD4 family. Specifically expressed in endothelial cells.

Its subcellular location is the nucleus. Its function is as follows. May be involved in inflammatory process. May regulate cell architecture and adhesion. The chain is C2 calcium-dependent domain-containing protein 4A (C2CD4A) from Homo sapiens (Human).